The primary structure comprises 213 residues: MKLFKISLIKNYFIEGSSYGLFNFDLQDFSNCDRVAWGNLLRRTLLKDLEGLRFGNSSIFISRSFSKIPYYHRVNEYSDIEQVNPSLLQVFSNFRNLHIFSSKPFYRKTSYSMIKVLTSRSYFSKDILLPNNLYVVNPDVQLFEFLSKRYKLRIISEICKGSGKSFSPIKKVNYVVEGIPYASLLLEIYTDLRANALSSLLATLRLINPKFAA.

It belongs to the RNA polymerase alpha chain family. In terms of assembly, in plastids the minimal PEP RNA polymerase catalytic core is composed of four subunits: alpha, beta, beta', and beta''. When a (nuclear-encoded) sigma factor is associated with the core the holoenzyme is formed, which can initiate transcription.

It is found in the plastid. The protein localises to the chloroplast. The enzyme catalyses RNA(n) + a ribonucleoside 5'-triphosphate = RNA(n+1) + diphosphate. DNA-dependent RNA polymerase catalyzes the transcription of DNA into RNA using the four ribonucleoside triphosphates as substrates. The protein is DNA-directed RNA polymerase subunit alpha (rpoA) of Euglena stellata.